The primary structure comprises 929 residues: SED5-binding protein 3 (929 aa).

The residue at position 15 (Ser-15) is a Phosphoserine. Positions 18–28 are enriched in polar residues; that stretch reads ESTVHTGGASS. A disordered region spans residues 18 to 52; the sequence is ESTVHTGGASSKKSRRPHRAYHNFSSGTVPTLGNS. Basic residues predominate over residues 29-38; sequence KKSRRPHRAY. Over residues 40 to 52 the composition is skewed to polar residues; sequence NFSSGTVPTLGNS. Thr-72 carries the post-translational modification Phosphothreonine. Residues Ser-83, Ser-85, Ser-94, Ser-101, and Ser-110 each carry the phosphoserine modification. Thr-216 is subject to Phosphothreonine. A zinc finger-like region spans residues 220-244; that stretch reads CRRCRAYANPKFQFTYDSSVICNIC.

This sequence belongs to the SEC23/SEC24 family. SEC24 subfamily. In terms of assembly, COPII is composed of at least five proteins: the SEC23/24 complex, the SEC13/31 complex and SAR1. Binds to SED5. Interacts with GHR1.

Its subcellular location is the cytoplasm. The protein resides in the golgi apparatus membrane. The protein localises to the endoplasmic reticulum membrane. Its function is as follows. Component of the COPII coat, that covers ER-derived vesicles involved in transport from the endoplasmic reticulum to the Golgi apparatus. COPII acts in the cytoplasm to promote the transport of secretory, plasma membrane, and vacuolar proteins from the endoplasmic reticulum to the Golgi complex. This is SED5-binding protein 3 (SFB3) from Saccharomyces cerevisiae (strain ATCC 204508 / S288c) (Baker's yeast).